A 287-amino-acid chain; its full sequence is tRNA N(3)-cytidine methyltransferase METTL6 (287 aa).

S-adenosyl-L-methionine contacts are provided by Trp-45, Tyr-49, Gly-87, Asp-110, Asp-136, Leu-137, and Ile-157. The disordered stretch occupies residues 267 to 287; the sequence is RKPPKDPAPTTDSASLLRKEF.

The protein belongs to the methyltransferase superfamily. METL family. Monomer. Interacts with SARS1/SerRS; interaction is mediated via tRNA(Ser) and is required for N(3)-methylcytidine methylation.

It is found in the cytoplasm. It localises to the nucleus. The catalysed reaction is cytidine(32) in tRNA(Ser) + S-adenosyl-L-methionine = N(3)-methylcytidine(32) in tRNA(Ser) + S-adenosyl-L-homocysteine + H(+). In terms of biological role, S-adenosyl-L-methionine-dependent methyltransferase that mediates N(3)-methylcytidine modification of residue 32 of the tRNA anticodon loop of tRNA(Ser), including tRNA(Ser)(UGA) and tRNA(Ser)(GCU). Interaction with SARS1/SerRS is required for N(3)-methylcytidine methylation. The polypeptide is tRNA N(3)-cytidine methyltransferase METTL6 (Mettl6) (Rattus norvegicus (Rat)).